Consider the following 308-residue polypeptide: Taste receptor type 2 member 43 (308 aa).

Residue Met-1 is a topological domain, extracellular. The helical transmembrane segment at 2–22 threads the bilayer; the sequence is ITFLPIIFSILVVVTFVIGNC. Residues 23–46 lie on the Cytoplasmic side of the membrane; that stretch reads ANGFIALVNSTEWVKRQKISFADQ. A helical membrane pass occupies residues 47–67; it reads ILTALAVSRVGLLWVLLLNWY. At 68 to 86 the chain is on the extracellular side; it reads ATVLNPAFYSVEVRTIVYN. A helical membrane pass occupies residues 87–107; the sequence is LWAVINHFSNWLATSLSIFYL. The Cytoplasmic segment spans residues 108–126; it reads LKIANFSNLIFLHLKRRVK. A helical transmembrane segment spans residues 127 to 147; that stretch reads SVVLVILLGPLLFLVCHLFVV. Residues 148–178 are Extracellular-facing; it reads NMNEIVRTKEYEGNMTWKSKLRSAMYLSNTT. Residues Asn-161 and Asn-176 are each glycosylated (N-linked (GlcNAc...) asparagine). Residues 179 to 199 traverse the membrane as a helical segment; the sequence is VTILANLVPFILTLISFLLLI. Residues 200–229 lie on the Cytoplasmic side of the membrane; sequence CSLCKHLKKMQLRDKGSQDPSTKVHIKALQ. Residues 230–249 form a helical membrane-spanning segment; that stretch reads TVISLLLCVIYFLSIMISSW. Residues 250–258 lie on the Extracellular side of the membrane; sequence SLGRVENKA. A helical membrane pass occupies residues 259–279; sequence VFMFCKAIRFSYPSAHAFILI. The Cytoplasmic portion of the chain corresponds to 280–308; sequence WGNKKLKQTLLSVLWNVRYCVKGQKLPSP.

It belongs to the G-protein coupled receptor T2R family.

The protein resides in the membrane. The protein localises to the cell projection. Its subcellular location is the cilium membrane. In terms of biological role, gustducin-coupled receptor immplicated in the perception of bitter compounds in the oral cavity and the gastrointestinal tract. Signals through PLCB2 and the calcium-regulated cation channel TRPM5. Activated by the sulfonyl amide sweeteners saccharin and acesulfame K. In airway epithelial cells, binding of bitter compounds increases the intracellular calcium ion concentration and stimulates ciliary beat frequency. May act as chemosensory receptors in airway epithelial cells to detect and eliminate potential noxious agents from the airways. This is Taste receptor type 2 member 43 (TAS2R43) from Papio hamadryas (Hamadryas baboon).